A 340-amino-acid chain; its full sequence is GTPase Obg (340 aa).

The 158-residue stretch at 1 to 158 folds into the Obg domain; it reads MSFIDEAKVY…KYITLKLKII (158 aa). The OBG-type G domain maps to 159 to 325; it reads SDIGIIGLPN…LSTLIQYIHK (167 aa). Residues 165–172, 190–194, 211–214, 278–281, and 306–308 each bind GTP; these read GLPNAGKS, FTTLE, DIPG, NKSD, and SSI. Residues S172 and T192 each contribute to the Mg(2+) site.

It belongs to the TRAFAC class OBG-HflX-like GTPase superfamily. OBG GTPase family. Monomer. Mg(2+) serves as cofactor.

Its subcellular location is the cytoplasm. In terms of biological role, an essential GTPase which binds GTP, GDP and possibly (p)ppGpp with moderate affinity, with high nucleotide exchange rates and a fairly low GTP hydrolysis rate. Plays a role in control of the cell cycle, stress response, ribosome biogenesis and in those bacteria that undergo differentiation, in morphogenesis control. The protein is GTPase Obg of Ehrlichia chaffeensis (strain ATCC CRL-10679 / Arkansas).